Reading from the N-terminus, the 902-residue chain is Chloride channel protein 2 (902 aa).

The Cytoplasmic portion of the chain corresponds to 1 to 89 (MAASAAAAGE…RCHKFLVSRV (89 aa)). The segment at 18 to 36 (QYEQTLMYGRYTQELGAFA) is essential for channel gating by both voltage and cell volume. Position 22 is a phosphothreonine (Thr22). Positions 38–51 (EEAARIRLGGPEPW) are modulates channel gating by both voltage and cell volume. 2 consecutive transmembrane segments (helical) span residues 90–123 (GEDWIFLVLLGLLMALVSWAMDYAIAVCLQAQQW) and 132–157 (ILLQYLAWVTYPVVLITFSAGFTQIL). A Selectivity filter part_1 motif is present at residues 163-167 (GSGIP). An intramembrane region (helical) is located at residues 166–173 (IPEMKTIL). Transmembrane regions (helical) follow at residues 182-200 (LTLKTFVAKVIGLTCALGS) and 207-225 (EGPFVHIASMCASLLSKFL). The Selectivity filter part_2 motif lies at 205-209 (GKEGP). 2 intramembrane regions (helical) span residues 241–253 (MLAAACAVGVGCC) and 257–265 (PIGGVLFSI). A run of 5 helical transmembrane segments spans residues 277–297 (YWRGFFSATFSAFIFRVLAVW), 323–351 (LPAFAVIGIASGFGGALFVYLNRKIVQVM), 360–379 (FLMRKRLLFPALVTLLISTL), 431–451 (ANVFLTLVIFILMKFWMSALA), and 459–482 (GAFMPVFVIGAAFGRLVGESMAAW). Positions 459–463 (GAFMP) match the Selectivity filter part_3 motif. An intramembrane region (helical) is located at residues 499–513 (GGYAVVGAAALAGAV). The note=Loop between two helices intramembrane region spans 514 to 515 (TH). Positions 516 to 527 (TVSTAVIVFELT) form an intramembrane region, helical. The segment at residues 528–532 (GQIAH) is an intramembrane region (note=Loop between two helices). Residues 533 to 550 (ILPVMIAVILANAVAQSL) traverse the membrane as a helical segment. Over 551–902 (QPSLYDSIIR…SPSDSDDKCQ (352 aa)) the chain is Cytoplasmic. In terms of domain architecture, CBS 1 spans 586–644 (MVRDVPYVALNCTFRDLRLALHRTKGRMLALVESSESMILLGSIERSQVVTLLGAQLSA). The interval 648–748 (RQHIQERRKA…TSDLEKPESC (101 aa)) is disordered. Polar residues-rich tracts occupy residues 671–683 (PESSVHFQVNTED) and 706–719 (SNASKAGETSTGSM). One can recognise a CBS 2 domain in the interval 794–854 (IDPAPFQLVE…GSVTAQGVKV (61 aa)). Positions 816-817 (LL) match the Basolateral membrane sorting motif. The interval 860–902 (SFRDSATSSSDTETTEVHALWGPHSCHGLPRDGSPSDSDDKCQ) is disordered.

This sequence belongs to the chloride channel (TC 2.A.49) family. ClC-2/CLCN2 subfamily. Homodimer. Interacts with auxiliary subunit HEPACAM.

Its subcellular location is the cell membrane. The protein localises to the basolateral cell membrane. It is found in the cell projection. The protein resides in the dendritic spine membrane. It localises to the axon. The catalysed reaction is chloride(in) = chloride(out). It catalyses the reaction thiocyanate(in) = thiocyanate(out). The enzyme catalyses bromide(in) = bromide(out). It carries out the reaction nitrate(in) = nitrate(out). The catalysed reaction is iodide(out) = iodide(in). Common gate kinetics are down-regulated by intracellular ATP. Inhibited by AK-42, a derivative of meclofenamate. Inhibited by Cd(2+). Inhibited by Zn(2+) and PKC activation. Inhibited at acidic pH. CCLN2:HEPACAM channel conductance is up-regulated upon hypo-osmolarity. Functionally, voltage-gated and osmosensitive chloride channel. Forms a homodimeric channel where each subunit has its own ion conduction pathway. Conducts double-barreled currents controlled by two types of gates, two fast glutamate gates that control each subunit independently and a slow common gate that opens and shuts off both subunits simultaneously. Displays inward rectification currents activated upon membrane hyperpolarization and extracellular hypotonicity. Contributes to chloride conductance involved in neuron excitability. In hippocampal neurons, generates a significant part of resting membrane conductance and provides an additional chloride efflux pathway to prevent chloride accumulation in dendrites upon GABA receptor activation. In glia, associates with the auxiliary subunit HEPACAM/GlialCAM at astrocytic processes and myelinated fiber tracts where it may regulate transcellular chloride flux buffering extracellular chloride and potassium concentrations. Regulates aldosterone production in adrenal glands. The opening of CLCN2 channels at hyperpolarized membrane potentials in the glomerulosa causes cell membrane depolarization, activation of voltage-gated calcium channels and increased expression of aldosterone synthase, the rate-limiting enzyme for aldosterone biosynthesis. Contributes to chloride conductance in retinal pigment epithelium involved in phagocytosis of shed photoreceptor outer segments and photoreceptor renewal. Conducts chloride currents at the basolateral membrane of epithelial cells with a role in chloride reabsorption rather than secretion. Permeable to small monovalent anions with chloride &gt; thiocyanate &gt; bromide &gt; nitrate &gt; iodide ion selectivity. In Cavia porcellus (Guinea pig), this protein is Chloride channel protein 2 (CLCN2).